Reading from the N-terminus, the 447-residue chain is Phospholipase A(1) DAD1, chloroplastic (447 aa).

Residues 1 to 46 (MRFSLSPVRPHSVVVPSLPKQDVVSYISGTTSNRQCRCVLTLPSPS) constitute a chloroplast transit peptide. The short motif at 293–297 (GHSLG) is the GXSXG element. The Acyl-ester intermediate role is filled by Ser295. Active-site charge relay system residues include Asp352 and His418.

This sequence belongs to the AB hydrolase superfamily. Lipase family. In terms of tissue distribution, expressed in flower buds, but not in leaves or roots. Restricted to the stamen filaments immediately before flower opening.

The protein localises to the plastid. It localises to the chloroplast. It catalyses the reaction a 1,2-diacyl-sn-glycero-3-phosphocholine + H2O = a 2-acyl-sn-glycero-3-phosphocholine + a fatty acid + H(+). It carries out the reaction 1-hexadecanoyl-2-(9Z,12Z-octadecadienoyl)-sn-glycero-3-phosphocholine + H2O = 2-(9Z,12Z-octadecadienoyl)-sn-glycero-3-phosphocholine + hexadecanoate + H(+). Its function is as follows. Sn-1-specific phospholipase that releases free fatty acids from phospholipids. Low activity on galactolipids and triacylglycerols. Catalyzes the initial step of jasmonic acid biosynthesis. Not essential for jasmonate biosynthesis after wounding or upon pathogen infection. The chain is Phospholipase A(1) DAD1, chloroplastic from Arabidopsis thaliana (Mouse-ear cress).